The following is a 277-amino-acid chain: Shikimate dehydrogenase (NADP(+)) (277 aa).

Shikimate is bound by residues 15 to 17 (SLS) and T62. K66 serves as the catalytic Proton acceptor. Residues N87 and D102 each contribute to the shikimate site. NADP(+) contacts are provided by residues 127 to 131 (GAGGA), 151 to 156 (NRTVDK), and I219. Residue Y221 coordinates shikimate. Position 242 (G242) interacts with NADP(+).

Belongs to the shikimate dehydrogenase family. Homodimer.

The catalysed reaction is shikimate + NADP(+) = 3-dehydroshikimate + NADPH + H(+). It functions in the pathway metabolic intermediate biosynthesis; chorismate biosynthesis; chorismate from D-erythrose 4-phosphate and phosphoenolpyruvate: step 4/7. Involved in the biosynthesis of the chorismate, which leads to the biosynthesis of aromatic amino acids. Catalyzes the reversible NADPH linked reduction of 3-dehydroshikimate (DHSA) to yield shikimate (SA). The chain is Shikimate dehydrogenase (NADP(+)) from Bacillus cereus (strain G9842).